A 730-amino-acid chain; its full sequence is Sodium-dependent neutral amino acid transporter B(0)AT2 (730 aa).

Positions 1-24 (MPKNSKVVKRELDDDVTESVKDLL) are disordered. At 1-70 (MPKNSKVVKR…RPAWSSKLQY (70 aa)) the chain is on the extracellular side. 2 positions are modified to phosphoserine: Ser-25 and Ser-55. Helical transmembrane passes span 71 to 91 (ILAQVGFSVGLGNVWRFPYLC), 97 to 117 (GAYLLPYLILLMVIGIPLFFL), and 149 to 169 (VVCYFVALYYNVIIGWSLFYF). Residues 170 to 223 (SQSFQQPLPWDQCPLVKNASHTFVEPECEQSSATTYYWYREALNISSSISESGG) lie on the Cytoplasmic side of the membrane. 2 helical membrane passes run 224-244 (LNWKMTICLLAAWVMVCLAMI) and 253-273 (IIYFSSLFPYVVLICFLIRAL). The N-linked (GlcNAc...) asparagine glycan is linked to Asn-276. Helical transmembrane passes span 302–322 (AATQVFFALGLGFGGVIAFSS) and 335–355 (VLVSFINFFTSVLATLVVFAV). At 356–458 (LGFKANVINE…AMTHFPASPF (103 aa)) the chain is on the cytoplasmic side. The next 5 helical transmembrane spans lie at 459 to 479 (WSVMFFLMLVNLGLGSMFGTI), 494 to 514 (KEILTVICCLLAFCIGLIFVQ), 530 to 550 (TLPLLIVVILENIAVCFVYGI), 575 to 595 (YVSPLMLLSLLIASVVNMGLS), and 619 to 639 (LVVCVSLVVFAVLPVPVVFIV). At 640–730 (RRFNLIDDSS…IMPDMPESDL (91 aa)) the chain is on the extracellular side. Phosphoserine is present on residues Ser-687, Ser-699, and Ser-701.

It belongs to the sodium:neurotransmitter symporter (SNF) (TC 2.A.22) family. SLC6A15 subfamily.

The protein resides in the membrane. The catalysed reaction is L-leucine(in) + Na(+)(in) = L-leucine(out) + Na(+)(out). It carries out the reaction L-isoleucine(in) + Na(+)(in) = L-isoleucine(out) + Na(+)(out). It catalyses the reaction L-methionine(in) + Na(+)(in) = L-methionine(out) + Na(+)(out). The enzyme catalyses L-proline(in) + Na(+)(in) = L-proline(out) + Na(+)(out). The catalysed reaction is L-alanine(in) + Na(+)(in) = L-alanine(out) + Na(+)(out). It carries out the reaction L-asparagine(in) + Na(+)(in) = L-asparagine(out) + Na(+)(out). It catalyses the reaction L-valine(in) + Na(+)(in) = L-valine(out) + Na(+)(out). The enzyme catalyses L-cysteine(in) + Na(+)(in) = L-cysteine(out) + Na(+)(out). The catalysed reaction is L-glutamine(in) + Na(+)(in) = L-glutamine(out) + Na(+)(out). It carries out the reaction L-serine(in) + Na(+)(in) = L-serine(out) + Na(+)(out). It catalyses the reaction L-threonine(in) + Na(+)(in) = L-threonine(out) + Na(+)(out). The enzyme catalyses L-pipecolate(in) + Na(+)(in) = L-pipecolate(out) + Na(+)(out). The catalysed reaction is L-phenylalanine(in) + Na(+)(in) = L-phenylalanine(out) + Na(+)(out). Functions as a sodium-dependent neutral amino acid transporter. Exhibits preference for the branched-chain amino acids, particularly leucine, valine and isoleucine and methionine. Can also transport low-affinity substrates such as alanine, phenylalanine, glutamine and pipecolic acid. Mediates the saturable, pH-sensitive and electrogenic cotransport of proline and sodium ions with a stoichiometry of 1:1. May have a role as transporter for neurotransmitter precursors into neurons. In contrast to other members of the neurotransmitter transporter family, does not appear to be chloride-dependent. This chain is Sodium-dependent neutral amino acid transporter B(0)AT2 (SLC6A15), found in Pongo abelii (Sumatran orangutan).